Here is a 151-residue protein sequence, read N- to C-terminus: Arginine repressor (151 aa).

The protein belongs to the ArgR family.

The protein resides in the cytoplasm. It participates in amino-acid biosynthesis; L-arginine biosynthesis [regulation]. Its function is as follows. Regulates arginine biosynthesis genes. The chain is Arginine repressor from Heliobacterium modesticaldum (strain ATCC 51547 / Ice1).